Here is a 355-residue protein sequence, read N- to C-terminus: Receptor-like serine/threonine-protein kinase At1g78530 (355 aa).

Residues 1-8 are Extracellular-facing; sequence MANAKETT. A helical membrane pass occupies residues 9-29; that stretch reads FYITISVVAFVIGKIVIALLF. Over 30–355 the chain is Cytoplasmic; it reads YKRWKRKHTI…YIKLSTRSSF (326 aa). The region spanning 75–347 is the Protein kinase domain; it reads LSNKDILGSG…TEVVKLLEYI (273 aa). ATP contacts are provided by residues 81–89 and K103; that span reads LGSGGFGTV. Y148 carries the post-translational modification Phosphotyrosine. D197 functions as the Proton acceptor in the catalytic mechanism. Phosphoserine occurs at positions 201 and 230. 2 positions are modified to phosphothreonine: T231 and T236. Phosphotyrosine is present on Y244.

Belongs to the protein kinase superfamily. Ser/Thr protein kinase family.

It localises to the cell membrane. The enzyme catalyses L-seryl-[protein] + ATP = O-phospho-L-seryl-[protein] + ADP + H(+). It carries out the reaction L-threonyl-[protein] + ATP = O-phospho-L-threonyl-[protein] + ADP + H(+). This is Receptor-like serine/threonine-protein kinase At1g78530 from Arabidopsis thaliana (Mouse-ear cress).